Reading from the N-terminus, the 389-residue chain is Putative F-box protein At3g10240 (389 aa).

The tract at residues 1-26 (MEQQEEKRKIKAYQRKSKRSKSGSSS) is disordered. A compositionally biased stretch (basic residues) spans 9 to 21 (KIKAYQRKSKRSK). One can recognise an F-box domain in the interval 21-66 (KSGSSSIPLDLVSEILLRLPEKSVARFRCVSKPWSSITTEPYFINL).

The polypeptide is Putative F-box protein At3g10240 (Arabidopsis thaliana (Mouse-ear cress)).